The primary structure comprises 229 residues: Ribonuclease T (229 aa).

An Exonuclease domain is found at 23-197 (VIIDVETAGF…YDTERTAKLF (175 aa)). Positions 26, 28, 184, and 189 each coordinate Mg(2+). The Proton donor/acceptor role is filled by His184.

It belongs to the RNase T family. Homodimer. The cofactor is Mg(2+).

In terms of biological role, trims short 3' overhangs of a variety of RNA species, leaving a one or two nucleotide 3' overhang. Responsible for the end-turnover of tRNA: specifically removes the terminal AMP residue from uncharged tRNA (tRNA-C-C-A). Also appears to be involved in tRNA biosynthesis. This is Ribonuclease T from Haemophilus influenzae (strain PittGG).